The sequence spans 76 residues: Small ribosomal subunit protein bS18 (76 aa).

Belongs to the bacterial ribosomal protein bS18 family. Part of the 30S ribosomal subunit. Forms a tight heterodimer with protein bS6.

Functionally, binds as a heterodimer with protein bS6 to the central domain of the 16S rRNA, where it helps stabilize the platform of the 30S subunit. The protein is Small ribosomal subunit protein bS18 of Neisseria gonorrhoeae (strain ATCC 700825 / FA 1090).